Consider the following 389-residue polypeptide: F-box protein At3g19880 (389 aa).

Residues Thr2–Lys49 form the F-box domain.

This Arabidopsis thaliana (Mouse-ear cress) protein is F-box protein At3g19880.